Here is a 427-residue protein sequence, read N- to C-terminus: Tol-Pal system protein TolB (427 aa).

Residues M1 to A27 form the signal peptide.

This sequence belongs to the TolB family. In terms of assembly, the Tol-Pal system is composed of five core proteins: the inner membrane proteins TolA, TolQ and TolR, the periplasmic protein TolB and the outer membrane protein Pal. They form a network linking the inner and outer membranes and the peptidoglycan layer.

It localises to the periplasm. Its function is as follows. Part of the Tol-Pal system, which plays a role in outer membrane invagination during cell division and is important for maintaining outer membrane integrity. This chain is Tol-Pal system protein TolB, found in Thiobacillus denitrificans (strain ATCC 25259 / T1).